A 441-amino-acid chain; its full sequence is C4-dicarboxylate transport protein (441 aa).

Over 1-30 (MIIEHSAEVRGKTPLYRHLYVQVLAAIAAG) the chain is Cytoplasmic. Residues 31-49 (ILLGHFYPDIGTELKPLGD) form a helical membrane-spanning segment. The Periplasmic segment spans residues 50–68 (AFIRLVKMIIAPVIFLTVA). Residues 69 to 87 (TGIAGMTDLAKVGRVAGKA) traverse the membrane as a helical segment. Over 88-99 (MIYFLAFSTLAL) the chain is Cytoplasmic. The helical transmembrane segment at 100 to 118 (VVGLVVANVVQPGAGMHID) threads the bilayer. Over 119 to 149 (PASLDAKAVATYAEKAHEQSITGFLMNIIPT) the chain is Periplasmic. A helical transmembrane segment spans residues 150 to 168 (TLVGAFAEGDILQVLFISV). Topologically, residues 169–171 (LFG) are cytoplasmic. The helical transmembrane segment at 172–190 (ISLAIVGKKAEPVVDFLQA) threads the bilayer. The Periplasmic segment spans residues 191 to 209 (LTLPIFRLVAILMKAAPIG). A helical transmembrane segment spans residues 210–228 (AFGAMAFTIGKYGIASIAN). The Cytoplasmic portion of the chain corresponds to 229–241 (LAMLIGTFYLTSF). The chain crosses the membrane as a helical span at residues 242-260 (LFVFIVLGAVARYNGFSIL). Over 261–281 (SLIRYIKEELLLVLGTSSSEA) the chain is Periplasmic. A helical transmembrane segment spans residues 282–300 (ALPGLMNKMEKAGCKRSVV). The Cytoplasmic portion of the chain corresponds to 301–320 (GLVIPTGYSFNLDGTNIYMT). Residues 321–339 (LAALFIAQATDTPLSYGDQ) traverse the membrane as a helical segment. At 340–350 (ILLLLVAMLSS) the chain is on the periplasmic side. A helical transmembrane segment spans residues 351-369 (KGAAGITGAGFITLAATLS). The Cytoplasmic portion of the chain corresponds to 370 to 378 (VVPSVPVAG). A helical membrane pass occupies residues 379–398 (MALILGIDRFMSECRALTNF). Topologically, residues 399 to 405 (VGNAVAT) are periplasmic. A helical membrane pass occupies residues 406–424 (IVVAKWEGELDQAQLSAAL). At 425 to 441 (GGEASVEAIPAVVQPAE) the chain is on the cytoplasmic side.

Belongs to the dicarboxylate/amino acid:cation symporter (DAACS) (TC 2.A.23) family.

It is found in the cell inner membrane. Functionally, responsible for the transport of dicarboxylates such as succinate, fumarate, and malate from the periplasm across the inner membrane. This transport system plays an important role in the energy supply of rhizobium-legume symbionts. The protein is C4-dicarboxylate transport protein (dctA) of Rhizobium meliloti (strain 1021) (Ensifer meliloti).